Here is a 338-residue protein sequence, read N- to C-terminus: Ketol-acid reductoisomerase (NADP(+)) (338 aa).

A KARI N-terminal Rossmann domain is found at 1–181 (MKVYYENDAD…GGTKAGVIET (181 aa)). NADP(+) contacts are provided by residues 24-27 (FGSQ), K47, S50, S52, and 82-85 (DQVQ). H107 is an active-site residue. Position 133 (G133) interacts with NADP(+). Residues 182 to 327 (NFKDETETDL…EKLRGMMSWL (146 aa)) form the KARI C-terminal knotted domain. 4 residues coordinate Mg(2+): D190, E194, E226, and E230. S251 lines the substrate pocket.

It belongs to the ketol-acid reductoisomerase family. The cofactor is Mg(2+).

The catalysed reaction is (2R)-2,3-dihydroxy-3-methylbutanoate + NADP(+) = (2S)-2-acetolactate + NADPH + H(+). It carries out the reaction (2R,3R)-2,3-dihydroxy-3-methylpentanoate + NADP(+) = (S)-2-ethyl-2-hydroxy-3-oxobutanoate + NADPH + H(+). Its pathway is amino-acid biosynthesis; L-isoleucine biosynthesis; L-isoleucine from 2-oxobutanoate: step 2/4. The protein operates within amino-acid biosynthesis; L-valine biosynthesis; L-valine from pyruvate: step 2/4. Functionally, involved in the biosynthesis of branched-chain amino acids (BCAA). Catalyzes an alkyl-migration followed by a ketol-acid reduction of (S)-2-acetolactate (S2AL) to yield (R)-2,3-dihydroxy-isovalerate. In the isomerase reaction, S2AL is rearranged via a Mg-dependent methyl migration to produce 3-hydroxy-3-methyl-2-ketobutyrate (HMKB). In the reductase reaction, this 2-ketoacid undergoes a metal-dependent reduction by NADPH to yield (R)-2,3-dihydroxy-isovalerate. This Chloroherpeton thalassium (strain ATCC 35110 / GB-78) protein is Ketol-acid reductoisomerase (NADP(+)).